A 302-amino-acid polypeptide reads, in one-letter code: Proteasome subunit beta (302 aa).

Positions 1 to 10 (MAGRVREVSH) are enriched in basic and acidic residues. The tract at residues 1–21 (MAGRVREVSHSSDQSGRLPAA) is disordered. Positions 1-67 (MAGRVREVSH…GPGAGEPPHA (67 aa)) are cleaved as a propeptide — removed in mature form; by autocatalysis. Residue Thr-68 is the Nucleophile of the active site. Residues 283 to 302 (RRGNPGGNPGISAVHGDGGN) form a disordered region.

The protein belongs to the peptidase T1B family. The 20S proteasome core is composed of 14 alpha and 14 beta subunits that assemble into four stacked heptameric rings, resulting in a barrel-shaped structure. The two inner rings, each composed of seven catalytic beta subunits, are sandwiched by two outer rings, each composed of seven alpha subunits. The catalytic chamber with the active sites is on the inside of the barrel. Has a gated structure, the ends of the cylinder being occluded by the N-termini of the alpha-subunits. Is capped by the proteasome-associated ATPase, ARC.

It localises to the cytoplasm. It carries out the reaction Cleavage of peptide bonds with very broad specificity.. The protein operates within protein degradation; proteasomal Pup-dependent pathway. The formation of the proteasomal ATPase ARC-20S proteasome complex, likely via the docking of the C-termini of ARC into the intersubunit pockets in the alpha-rings, may trigger opening of the gate for substrate entry. Interconversion between the open-gate and close-gate conformations leads to a dynamic regulation of the 20S proteasome proteolysis activity. Functionally, component of the proteasome core, a large protease complex with broad specificity involved in protein degradation. The sequence is that of Proteasome subunit beta from Kineococcus radiotolerans (strain ATCC BAA-149 / DSM 14245 / SRS30216).